The primary structure comprises 491 residues: MATQWEVVIGLETHAQLSTVSKIFSGAPTQFGAEPNTQACPVDLALPGVLPVLNRGAVERAIRFGLAIGSTIAPRSIFARKNYFYPDLPKGYQISQYEIPVVQGGQITIQVPANEKAGKPAYEKTVNLTRAHLEEDAGKSLHEDFAGMTGIDLNRAGTPLLEIVTEPEMRSAAEAVAYAKSLHALVVWLGICDGNMQEGSFRCDANVSVRPVGQEKFGTRAEIKNLNSFRFLEEAINYEVRRQIELIEDGGEVVQETRLYDPDKRETRSMRSKEDAHDYRYFPDPDLMPLVIGQDWIERVQAGMPELPAAIQQRFVEQYGVSAYDAGVLTSSKAMAAYFEAVVAKAGAANAKIAANWLMGDVSSQLNRDGIEIDAIPVSAAQLALVLQRIADGTISNKIAKEIFSAIWDEKATDEAAADRIIDAKGLKQISDTGALEAIIDEVLAANAKSVEEFRAGKEKAFNALIGQAMKATKGKANPQQVNELLKKKLG.

Belongs to the GatB/GatE family. GatB subfamily. Heterotrimer of A, B and C subunits.

The catalysed reaction is L-glutamyl-tRNA(Gln) + L-glutamine + ATP + H2O = L-glutaminyl-tRNA(Gln) + L-glutamate + ADP + phosphate + H(+). It catalyses the reaction L-aspartyl-tRNA(Asn) + L-glutamine + ATP + H2O = L-asparaginyl-tRNA(Asn) + L-glutamate + ADP + phosphate + 2 H(+). In terms of biological role, allows the formation of correctly charged Asn-tRNA(Asn) or Gln-tRNA(Gln) through the transamidation of misacylated Asp-tRNA(Asn) or Glu-tRNA(Gln) in organisms which lack either or both of asparaginyl-tRNA or glutaminyl-tRNA synthetases. The reaction takes place in the presence of glutamine and ATP through an activated phospho-Asp-tRNA(Asn) or phospho-Glu-tRNA(Gln). This is Aspartyl/glutamyl-tRNA(Asn/Gln) amidotransferase subunit B from Burkholderia ambifaria (strain ATCC BAA-244 / DSM 16087 / CCUG 44356 / LMG 19182 / AMMD) (Burkholderia cepacia (strain AMMD)).